The chain runs to 155 residues: Transcriptional repressor NrdR (155 aa).

Residues 1 to 10 are compositionally biased toward basic residues; it reads MQCPHCHHNS. Residues 1–21 form a disordered region; it reads MQCPHCHHNSSRVVDSRPTDG. A zinc finger spans residues 3-34; the sequence is CPHCHHNSSRVVDSRPTDGGRAIRRRRECENC. In terms of domain architecture, ATP-cone spans 49–139; the sequence is LLVIKKNGTR…VYRQFKDMSV (91 aa).

The protein belongs to the NrdR family. Zn(2+) serves as cofactor.

Functionally, negatively regulates transcription of bacterial ribonucleotide reductase nrd genes and operons by binding to NrdR-boxes. The protein is Transcriptional repressor NrdR of Lacticaseibacillus casei (strain BL23) (Lactobacillus casei).